The primary structure comprises 789 residues: MSAQTSPAEKGLNPGLMCQESYACSGTDEAIFECDECCSLQCLRCEEELHRQERLRNHERIRLKPGHVPYCDLCKGLSGHLPGVRQRAIVRCQTCKINLCLECQKRTHSGGNKRRHPVTVYNVSNLQESLEAEEMDEETKRKKMTEKVVSFLLVDENEEIQVTNEEDFIRKLDCKPDQHLKVASIFGNTGDGKSHTLNHTFFYGREVFKTSPTQESCTVGVWAAYDPVHKVAVIDTEGLLGATVNLSQRTRLLLKVLAISDLVIYRTHADRLHNDLFKFLGDASEAYLKHYTKELKATTARCGLDVPLSTLGPAVIIFHETVHTQLLGSDHPSEVPEKLIQDRFRKLGRFPEAFSSIHYKGTRTYNPPTDFSGLRRALEQLLENNTTRSPRHPGVIFKALKALSDRFSGEIPDDQMAHSSFFPDEYFTCSSLCLSCGVGCKNSMNHGKEGVPHEAKSRCRYSHQYDNRVYTCKACYEGGEEVSVVPKTSASTDSPWMGLAKYAWSGYVIECPNCGVVYRSRQYWFGNQDPVDTVVRTEIVHVWPGTDGFLKDNNNAAQRLLDGMNFMAQSVSELSLGPTKAVTSWLTDQIAPAYWRPNSQILSCNKCATSFKDNDTKHHCRACGEGFCDSCSSKTRPVPERGWGPAPVRVCDNCYEARNVQLAVTEAQVDDEGGTLIARKVGEAVQNTLGAVVTAIDIPLGLVKDAARPAYWVPDHEILHCHNCRKEFSIKLSKHHCRACGQGFCDECSHDRRAVPSRGWDHPVRVCFNCNKKPAWTSLSVMTGKGPLC.

Positions 416 to 788 are required for localization in the lipid droplets; sequence MAHSSFFPDE…LSVMTGKGPL (373 aa). FYVE-type zinc fingers lie at residues 598–659 and 715–775; these read NSQI…EARN and DHEI…KKPA. Residues Cys604, Cys607, Cys620, Cys623, Cys628, Cys631, Cys651, Cys654, Cys721, Cys724, Cys737, Cys740, Cys745, Cys748, Cys767, and Cys770 each contribute to the Zn(2+) site.

As to quaternary structure, interacts with RAB18 (in GTP-bound form). Interacts with BSCL2 in a RAB18-dependent manner. Interacts with ZW10.

The protein resides in the golgi apparatus. Its subcellular location is the golgi stack. It localises to the endoplasmic reticulum. The protein localises to the preautophagosomal structure. It is found in the lipid droplet. The protein resides in the mitochondrion. Plays a role in the formation of lipid droplets (LDs) which are storage organelles at the center of lipid and energy homeostasis. Regulates the morphology, size and distribution of LDs. Mediates the formation of endoplasmic reticulum-lipid droplets (ER-LD) contact sites by forming a complex with RAB18 and ZW10. Binds to phosphatidylinositol 3-phosphate (PtdIns3P) through FYVE-type zinc finger. In Pongo abelii (Sumatran orangutan), this protein is Zinc finger FYVE domain-containing protein 1 (ZFYVE1).